Consider the following 406-residue polypeptide: uncharacterized protein (406 aa).

The segment at 1-36 is disordered; sequence MDRVRSLIGNRRGRRHNRQHPPYPHSGSPSTVNLLG.

The protein to yeast YMR316w.

This is an uncharacterized protein from Saccharomyces cerevisiae (strain ATCC 204508 / S288c) (Baker's yeast).